The chain runs to 131 residues: Small ribosomal subunit protein uS8 (131 aa).

The protein belongs to the universal ribosomal protein uS8 family. As to quaternary structure, part of the 30S ribosomal subunit. Contacts proteins S5 and S12.

Its function is as follows. One of the primary rRNA binding proteins, it binds directly to 16S rRNA central domain where it helps coordinate assembly of the platform of the 30S subunit. This is Small ribosomal subunit protein uS8 from Vesicomyosocius okutanii subsp. Calyptogena okutanii (strain HA).